Reading from the N-terminus, the 484-residue chain is MDVDGEGDRGQNPRIMERDSDSIKDPISEPSWFTPKKLLFVFCVVNLINYIDRGAIASNGINGSRGSCTSSGTCSSGSGIQGDFNLSNFEDGVLSSAFMVGLLVASPIFASLAKSVNPFRLIGVGLSIWTLAVIGCGLSFDFWSITICRMFVGVGEASFVSLAAPFIDDNAPHDQKSAWLAVFYMCIPTGYAFGYVYGGVVGSVLPWRAAFWGEAILMLPFAVLGFVIKPLHLKGFAPDDTGKPRTDNLNVLPVGYGFSAVMKDLKLLLVDKVYVTNILGYIAYNFVLGAYSYWGPKAGYNIYKMENADMIFGGVTVVCGIVGTLSGGVILDYMDATISNAFKVLSVSTFIGAIFCFAAFCFKSMYAFLALFAVGELLVFATQGPVNFIVLHCVKPSLRPLAMAMSTVSIHIFGDVPSSPLVGVLQDYVNNWRVTSLVLTFVLFPAAAIWSIGIFLNSVDRYNEDSEPDAVTRESTAAPLLQEA.

The disordered stretch occupies residues 1-23 (MDVDGEGDRGQNPRIMERDSDSI). The chain crosses the membrane as a helical span at residues 38–58 (LLFVFCVVNLINYIDRGAIAS). Asn62 and Asn85 each carry an N-linked (GlcNAc...) asparagine glycan. The next 11 helical transmembrane spans lie at 93 to 113 (VLSSAFMVGLLVASPIFASLA), 122 to 142 (IGVGLSIWTLAVIGCGLSFDF), 147 to 167 (ICRMFVGVGEASFVSLAAPFI), 181 to 201 (AVFYMCIPTGYAFGYVYGGVV), 209 to 229 (AAFWGEAILMLPFAVLGFVIK), 273 to 293 (VYVTNILGYIAYNFVLGAYSY), 311 to 331 (IFGGVTVVCGIVGTLSGGVIL), 345 to 362 (LSVSTFIGAIFCFAAFCF), 377 to 397 (LLVFATQGPVNFIVLHCVKPS), 405 to 425 (MSTVSIHIFGDVPSSPLVGVL), and 436 to 456 (SLVLTFVLFPAAAIWSIGIFL). Ser466 is subject to Phosphoserine.

This sequence belongs to the major facilitator superfamily. Spinster (TC 2.A.1.49) family.

The protein localises to the late endosome membrane. It localises to the lysosome membrane. Probable sphingolipid transporter that plays a central role in endosomes and/or lysosomes storage. This Arabidopsis thaliana (Mouse-ear cress) protein is Probable sphingolipid transporter spinster homolog 2.